The chain runs to 312 residues: Mevalonate kinase (312 aa).

104 to 114 (PISCGLGSSAS) provides a ligand contact to ATP. Residue D155 is the Proton acceptor of the active site.

This sequence belongs to the GHMP kinase family. Mevalonate kinase subfamily. In terms of assembly, homodimer. It depends on Mg(2+) as a cofactor.

It is found in the cytoplasm. The catalysed reaction is (R)-mevalonate + ATP = (R)-5-phosphomevalonate + ADP + H(+). It functions in the pathway isoprenoid biosynthesis; isopentenyl diphosphate biosynthesis via mevalonate pathway; isopentenyl diphosphate from (R)-mevalonate: step 1/3. Farnesyl- and geranyl-pyrophosphates are competitive inhibitors. Slightly inhibited by high concentration of ATP. Catalyzes the phosphorylation of (R)-mevalonate (MVA) to (R)-mevalonate 5-phosphate (MVAP). Functions in the mevalonate (MVA) pathway leading to isopentenyl diphosphate (IPP), a key precursor for the biosynthesis of isoprenoid compounds such as archaeal membrane lipids. In Methanocaldococcus jannaschii (strain ATCC 43067 / DSM 2661 / JAL-1 / JCM 10045 / NBRC 100440) (Methanococcus jannaschii), this protein is Mevalonate kinase.